A 959-amino-acid chain; its full sequence is Isoleucine--tRNA ligase (959 aa).

A 'HIGH' region motif is present at residues 66-76; that stretch reads PYANGDIHIGH. An L-isoleucyl-5'-AMP-binding site is contributed by glutamate 592. Residues 633 to 637 carry the 'KMSKS' region motif; it reads KMSKS. Residue lysine 636 participates in ATP binding. Zn(2+) is bound by residues cysteine 922, cysteine 925, cysteine 942, and cysteine 945.

This sequence belongs to the class-I aminoacyl-tRNA synthetase family. IleS type 1 subfamily. As to quaternary structure, monomer. The cofactor is Zn(2+).

The protein resides in the cytoplasm. The enzyme catalyses tRNA(Ile) + L-isoleucine + ATP = L-isoleucyl-tRNA(Ile) + AMP + diphosphate. Its function is as follows. Catalyzes the attachment of isoleucine to tRNA(Ile). As IleRS can inadvertently accommodate and process structurally similar amino acids such as valine, to avoid such errors it has two additional distinct tRNA(Ile)-dependent editing activities. One activity is designated as 'pretransfer' editing and involves the hydrolysis of activated Val-AMP. The other activity is designated 'posttransfer' editing and involves deacylation of mischarged Val-tRNA(Ile). This is Isoleucine--tRNA ligase from Cupriavidus metallidurans (strain ATCC 43123 / DSM 2839 / NBRC 102507 / CH34) (Ralstonia metallidurans).